We begin with the raw amino-acid sequence, 499 residues long: C2H2-type transcription factor RPN4 (499 aa).

The disordered stretch occupies residues 329 to 397 (QTTKKDNSKP…TTKSTHTHSK (69 aa)). Positions 331–344 (TKKDNSKPVEKTVV) are enriched in basic and acidic residues. The span at 345–363 (EKTSSVTKAGSNHSRSTLA) shows a compositional bias: polar residues. The segment at 405-436 (FVCELVNSVTNEVCGAQFSRTYDLTRHQNTIH) adopts a C2H2-type zinc-finger fold.

Its subcellular location is the nucleus. In terms of biological role, transcription factor that acts as a transcriptional activator of a number of genes encoding proteasomal subunits. Plays a role in ergosterol and plasma membrane homeostasis, and subsequent azole resistance. Regulates the expression of 212 genes, activating 80 genes and repressing, likely in an indirect fashion, 132 genes. Targets comprise several proteasome and ergosterol biosynthesis genes, including ERG1, ERG2, ERG3, and ERG11. Directly regulates ERG11 expression through the 3'-TTGCAAA-5' binding motif. The chain is C2H2-type transcription factor RPN4 from Candida glabrata (strain ATCC 2001 / BCRC 20586 / JCM 3761 / NBRC 0622 / NRRL Y-65 / CBS 138) (Yeast).